Consider the following 303-residue polypeptide: Dihydroorotate dehydrogenase B (NAD(+)), catalytic subunit (303 aa).

FMN-binding positions include serine 23 and 47–48 (KS). Substrate is bound by residues lysine 47, 71–75 (NAMGL), and asparagine 125. An FMN-binding site is contributed by asparagine 125. Cysteine 128 functions as the Nucleophile in the catalytic mechanism. 2 residues coordinate FMN: lysine 163 and isoleucine 189. 190 to 191 (NT) contacts substrate. Residues glycine 215, 241–242 (GG), and 263–264 (GT) contribute to the FMN site.

Belongs to the dihydroorotate dehydrogenase family. Type 1 subfamily. In terms of assembly, heterotetramer of 2 PyrK and 2 PyrD type B subunits. FMN is required as a cofactor.

The protein resides in the cytoplasm. The enzyme catalyses (S)-dihydroorotate + NAD(+) = orotate + NADH + H(+). It participates in pyrimidine metabolism; UMP biosynthesis via de novo pathway; orotate from (S)-dihydroorotate (NAD(+) route): step 1/1. In terms of biological role, catalyzes the conversion of dihydroorotate to orotate with NAD(+) as electron acceptor. The protein is Dihydroorotate dehydrogenase B (NAD(+)), catalytic subunit (pyrD) of Pyrococcus horikoshii (strain ATCC 700860 / DSM 12428 / JCM 9974 / NBRC 100139 / OT-3).